A 93-amino-acid polypeptide reads, in one-letter code: Small ribosomal subunit protein uS19 (93 aa).

Belongs to the universal ribosomal protein uS19 family.

Protein S19 forms a complex with S13 that binds strongly to the 16S ribosomal RNA. In Clostridium perfringens (strain ATCC 13124 / DSM 756 / JCM 1290 / NCIMB 6125 / NCTC 8237 / Type A), this protein is Small ribosomal subunit protein uS19.